The chain runs to 322 residues: Phosphoenolpyruvate transferase (322 aa).

D58 is a 7,8-didemethyl-8-hydroxy-5-deazariboflavin binding site.

The protein belongs to the CofD family. In terms of assembly, homodimer. Requires Mg(2+) as cofactor.

It carries out the reaction enolpyruvoyl-2-diphospho-5'-guanosine + 7,8-didemethyl-8-hydroxy-5-deazariboflavin = dehydro coenzyme F420-0 + GMP + H(+). It participates in cofactor biosynthesis; coenzyme F420 biosynthesis. Functionally, catalyzes the transfer of the phosphoenolpyruvate moiety from enoylpyruvoyl-2-diphospho-5'-guanosine (EPPG) to 7,8-didemethyl-8-hydroxy-5-deazariboflavin (FO) with the formation of dehydro coenzyme F420-0 and GMP. The polypeptide is Phosphoenolpyruvate transferase (Thermobifida fusca (strain YX)).